The following is a 675-amino-acid chain: Polyamine deacetylase HDAC10 (675 aa).

Aspartate 22 lines the substrate pocket. Residues 23 to 26 carry the Substrate specificity motif; it reads PACE. A substrate-binding site is contributed by aspartate 94. Histidine 137 serves as the catalytic Proton donor/acceptor. Zn(2+) contacts are provided by aspartate 174, histidine 176, and aspartate 267. Tyrosine 307 lines the substrate pocket. A disordered region spans residues 362-399; it reads LAQSETNPKRPRLDATNGGPKESSEPASESNPKKTAQD.

Belongs to the histone deacetylase family. HD type 2 subfamily.

The protein resides in the cytoplasm. It is found in the nucleus. It catalyses the reaction N(8)-acetylspermidine + H2O = spermidine + acetate. The catalysed reaction is N-acetylputrescine + H2O = putrescine + acetate. It carries out the reaction N-acetylcadaverine + H2O = cadaverine + acetate. In terms of biological role, polyamine deacetylase (PDAC), which acts preferentially on N(8)-acetylspermidine, and also on acetylcadaverine and acetylputrescine. Exhibits attenuated catalytic activity toward N(1),N(8)-diacetylspermidine and very low activity, if any, toward N(1)-acetylspermidine. Has a very weak lysine deacetylase, if any. The sequence is that of Polyamine deacetylase HDAC10 (hdac10) from Danio rerio (Zebrafish).